We begin with the raw amino-acid sequence, 591 residues long: Laccase (591 aa).

Residues 1 to 20 (MPSFFRALFSGLIASQLSWA) form the signal peptide. Plastocyanin-like domains lie at 66-189 (VRQY…IQID) and 198-356 (IDLG…HPTN). An N-linked (GlcNAc...) asparagine glycan is attached at Asn121. Cu cation contacts are provided by His126, His128, His171, and His173. 2 disulfide bridges follow: Cys147–Cys571 and Cys332–Cys366. Residues Asn234, Asn242, Asn265, and Asn323 are each glycosylated (N-linked (GlcNAc...) asparagine). Asn407 and Asn425 each carry an N-linked (GlcNAc...) asparagine glycan. Residues 416-551 (GHPITQYVIN…AGLGNTFLEQ (136 aa)) enclose the Plastocyanin-like 3 domain. Cu cation contacts are provided by His463, His466, His468, His533, Cys534, His535, and His539.

The protein belongs to the multicopper oxidase family. It depends on Cu cation as a cofactor.

Its subcellular location is the secreted. The catalysed reaction is 4 hydroquinone + O2 = 4 benzosemiquinone + 2 H2O. Functionally, lignin degradation and detoxification of lignin-derived products. The chain is Laccase (LAC-1) from Cryphonectria parasitica (Chestnut blight fungus).